The chain runs to 422 residues: G-protein coupled receptor 83 (422 aa).

A signal peptide spans Met1–Ala17. The Extracellular segment spans residues Thr18 to Lys70. The chain crosses the membrane as a helical span at residues Ala71–Val91. Over Cys92–Ser106 the chain is Cytoplasmic. Residues Leu107 to Thr127 form a helical membrane-spanning segment. Over Leu128 to Cys143 the chain is Extracellular. Cysteines 143 and 223 form a disulfide. Residues His144 to Val166 form a helical membrane-spanning segment. Topologically, residues Asp167–Lys184 are cytoplasmic. Residues Gly185–Ile205 traverse the membrane as a helical segment. The Extracellular segment spans residues Cys206 to Lys236. A helical membrane pass occupies residues Tyr237–Ala257. The Cytoplasmic portion of the chain corresponds to Tyr258 to Met292. The helical transmembrane segment at Leu293–Leu313 threads the bilayer. The Extracellular segment spans residues Leu314–Tyr326. Residues Phe327 to Leu347 form a helical membrane-spanning segment. Over Asn348–Ser422 the chain is Cytoplasmic. The disordered stretch occupies residues Pro401–Ser422.

It belongs to the G-protein coupled receptor 1 family. In terms of tissue distribution, expressed preferentially in brain, and its neuronal expression is relegated to limbic brain regions, particularly in forebrain.

It localises to the cell membrane. Its function is as follows. G-protein coupled receptor for PEN, a neuropeptide produced from the precursor protein, proSAAS (encoded by PCSK1N). Acts through a G(i)- and G(q)-alpha-alpha-mediated pathway in response to PEN. Plays a role in food intake and body weight regulation. May contribute to the regulation of anxiety-related behaviors. The polypeptide is G-protein coupled receptor 83 (Rattus norvegicus (Rat)).